The primary structure comprises 736 residues: Zinc finger CCCH domain-containing protein 14 (736 aa).

Residue methionine 1 is modified to N-acetylmethionine. 2 stretches are compositionally biased toward polar residues: residues 77 to 103 (TTEPSSLKSSDTNIFDSNVPSNKSNFS) and 131 to 145 (VSTSSQESKTTNVRQ). The interval 77–145 (TTEPSSLKSS…QESKTTNVRQ (69 aa)) is disordered. Position 85 is a phosphoserine (serine 85). Residues lysine 99, lysine 139, lysine 175, and lysine 198 each participate in a glycyl lysine isopeptide (Lys-Gly) (interchain with G-Cter in SUMO2) cross-link. Serine 240 carries the phosphoserine modification. A Glycyl lysine isopeptide (Lys-Gly) (interchain with G-Cter in SUMO2) cross-link involves residue lysine 245. Serine 281 bears the Phosphoserine mark. Glycyl lysine isopeptide (Lys-Gly) (interchain with G-Cter in SUMO2) cross-links involve residues lysine 283 and lysine 295. Residues 310–350 (HDGEEEEEDDDYGSRTGSISSSVSVPAKPERRPSLPPSKQA) form a disordered region. Phosphoserine occurs at positions 327 and 343. Lysine 357 bears the N6-acetyllysine; alternate mark. Lysine 357 is covalently cross-linked (Glycyl lysine isopeptide (Lys-Gly) (interchain with G-Cter in SUMO2); alternate). Residue lysine 378 forms a Glycyl lysine isopeptide (Lys-Gly) (interchain with G-Cter in SUMO2) linkage. Serine 390 and serine 409 each carry phosphoserine. Residues 398–430 (VVQGQSRTPRISPPIKEEETKGDSVEKNQGTQQ) are disordered. Positions 412-423 (IKEEETKGDSVE) are enriched in basic and acidic residues. Residue lysine 413 forms a Glycyl lysine isopeptide (Lys-Gly) (interchain with G-Cter in SUMO2) linkage. Serine 421 is subject to Phosphoserine. Lysine 489 is covalently cross-linked (Glycyl lysine isopeptide (Lys-Gly) (interchain with G-Cter in SUMO2)). Residues serine 498, serine 515, serine 527, and serine 620 each carry the phosphoserine modification. 5 consecutive C3H1-type zinc fingers follow at residues 595 to 620 (EKLLERCKYWPACKNGDECAYHHPIS), 621 to 640 (PCKAFPNCKFAEKCLFVHPN), 641 to 656 (CKYDAKCTKPDCPFTH), 682 to 699 (CRYFPACKKMECPFYHPK), and 701 to 719 (CRFNTQCTRPDCTFYHPTI).

This sequence belongs to the ZC3H14 family. In terms of assembly, homodimer; facilitating circular RNAs (circRNAs) formation. Associates with the spliceosome. Interacts with HOOK2. Interacts with ZFC3H1 in a RNase-sensitive manner. Expressed in fetal and adult brain. Expressed in fetal and adult temporal lobe.

It localises to the nucleus speckle. The protein resides in the cytoplasm. RNA-binding protein involved in the biogenesis of circular RNAs (circRNAs), which are produced by back-splicing circularization of pre-mRNAs. Acts by binding to both exon-intron boundary and 3'-UTR of pre-mRNAs to promote circRNA biogenesis through dimerization and the association with the spliceosome. Required for spermatogenesis via involvement in circRNA biogenesis. Regulates the pre-mRNA processing of ATP5MC1; preventing its degradation. Also binds the poly(A) tail of mRNAs; controlling poly(A) length in neuronal cells. This Homo sapiens (Human) protein is Zinc finger CCCH domain-containing protein 14.